Here is a 281-residue protein sequence, read N- to C-terminus: NAD kinase (281 aa).

D61 functions as the Proton acceptor in the catalytic mechanism. Residues 61-62, 134-135, R145, D164, 175-180, and Q234 each bind NAD(+); these read DG, ND, and TAYSLS.

It belongs to the NAD kinase family. It depends on a divalent metal cation as a cofactor.

It is found in the cytoplasm. It carries out the reaction NAD(+) + ATP = ADP + NADP(+) + H(+). In terms of biological role, involved in the regulation of the intracellular balance of NAD and NADP, and is a key enzyme in the biosynthesis of NADP. Catalyzes specifically the phosphorylation on 2'-hydroxyl of the adenosine moiety of NAD to yield NADP. This Clostridium botulinum (strain Loch Maree / Type A3) protein is NAD kinase.